Consider the following 223-residue polypeptide: UPF0441 protein ETA_04310 (223 aa).

Residues 166-223 (YGAATPGRTMTVPKSALAPKPATTSTVTRGGFGESVAKQNTMQRNSSSTGSANRSMGG) are disordered. Over residues 202–223 (AKQNTMQRNSSSTGSANRSMGG) the composition is skewed to polar residues.

It belongs to the UPF0441 family.

This chain is UPF0441 protein ETA_04310, found in Erwinia tasmaniensis (strain DSM 17950 / CFBP 7177 / CIP 109463 / NCPPB 4357 / Et1/99).